Reading from the N-terminus, the 326-residue chain is MSSLSGHASTIQPSCLGFCGRTVLVGNYSEDVEATTTAAGSTSLSRCGPCSFGYRNNAMSICESCDTPLQPYDWMYLLFIALLPLLLHMQFIRIARKYCRTRYYEVSEYLCVILENVIACVIAVLIYPPRFTFFLNGCSKTDIKEWYPACYNPRIGYTKTMRCTYEVVFPLYSITFIHHLILIGSILVLRSTLYCVLLYKTYNGKPFYAAIVSVPILAVIHAVLSGVVFYTFPYILLIGSLWAMCFHLALEGKRPLKEMIVRIATSPTHLIFLSITMLMLSFGVIAIIAPLDIPYRWSFLCIVPVPFIFYMATIPFSNPTTTMRLS.

Topologically, residues 1-71 (MSSLSGHAST…CESCDTPLQP (71 aa)) are lumenal. N27 carries N-linked (GlcNAc...) asparagine glycosylation. The chain crosses the membrane as a helical span at residues 72–92 (YDWMYLLFIALLPLLLHMQFI). The Cytoplasmic segment spans residues 93–108 (RIARKYCRTRYYEVSE). A helical membrane pass occupies residues 109 to 129 (YLCVILENVIACVIAVLIYPP). Topologically, residues 130 to 166 (RFTFFLNGCSKTDIKEWYPACYNPRIGYTKTMRCTYE) are lumenal. The helical transmembrane segment at 167–187 (VVFPLYSITFIHHLILIGSIL) threads the bilayer. The Cytoplasmic portion of the chain corresponds to 188–208 (VLRSTLYCVLLYKTYNGKPFY). 2 helical membrane passes run 209-229 (AAIVSVPILAVIHAVLSGVVF) and 230-250 (YTFPYILLIGSLWAMCFHLAL). The Cytoplasmic portion of the chain corresponds to 251 to 269 (EGKRPLKEMIVRIATSPTH). A helical transmembrane segment spans residues 270-290 (LIFLSITMLMLSFGVIAIIAP). The Lumenal portion of the chain corresponds to 291-296 (LDIPYR). Residues 297–317 (WSFLCIVPVPFIFYMATIPFS) traverse the membrane as a helical segment. The Cytoplasmic portion of the chain corresponds to 318–326 (NPTTTMRLS).

It is found in the endoplasmic reticulum membrane. In terms of biological role, facilitates degradation of misfolded endoplasmic reticulum (ER) proteins through the recruitment of components of the proteasome and endoplasmic reticulum-associated degradation (ERAD) system. Involved in ER stress response. The protein is JNK1/MAPK8-associated membrane protein homolog of Caenorhabditis elegans.